Here is a 174-residue protein sequence, read N- to C-terminus: Crossover junction endodeoxyribonuclease RuvC (174 aa).

Catalysis depends on residues aspartate 8, glutamate 69, and aspartate 141. Residues aspartate 8, glutamate 69, and aspartate 141 each contribute to the Mg(2+) site.

Belongs to the RuvC family. In terms of assembly, homodimer which binds Holliday junction (HJ) DNA. The HJ becomes 2-fold symmetrical on binding to RuvC with unstacked arms; it has a different conformation from HJ DNA in complex with RuvA. In the full resolvosome a probable DNA-RuvA(4)-RuvB(12)-RuvC(2) complex forms which resolves the HJ. Mg(2+) serves as cofactor.

The protein localises to the cytoplasm. It catalyses the reaction Endonucleolytic cleavage at a junction such as a reciprocal single-stranded crossover between two homologous DNA duplexes (Holliday junction).. Its function is as follows. The RuvA-RuvB-RuvC complex processes Holliday junction (HJ) DNA during genetic recombination and DNA repair. Endonuclease that resolves HJ intermediates. Cleaves cruciform DNA by making single-stranded nicks across the HJ at symmetrical positions within the homologous arms, yielding a 5'-phosphate and a 3'-hydroxyl group; requires a central core of homology in the junction. The consensus cleavage sequence is 5'-(A/T)TT(C/G)-3'. Cleavage occurs on the 3'-side of the TT dinucleotide at the point of strand exchange. HJ branch migration catalyzed by RuvA-RuvB allows RuvC to scan DNA until it finds its consensus sequence, where it cleaves and resolves the cruciform DNA. The protein is Crossover junction endodeoxyribonuclease RuvC of Xanthomonas campestris pv. campestris (strain 8004).